The primary structure comprises 317 residues: Methionyl-tRNA formyltransferase (317 aa).

Position 110–113 (110–113) interacts with (6S)-5,6,7,8-tetrahydrofolate; that stretch reads SLLP.

This sequence belongs to the Fmt family.

It catalyses the reaction L-methionyl-tRNA(fMet) + (6R)-10-formyltetrahydrofolate = N-formyl-L-methionyl-tRNA(fMet) + (6S)-5,6,7,8-tetrahydrofolate + H(+). Attaches a formyl group to the free amino group of methionyl-tRNA(fMet). The formyl group appears to play a dual role in the initiator identity of N-formylmethionyl-tRNA by promoting its recognition by IF2 and preventing the misappropriation of this tRNA by the elongation apparatus. This chain is Methionyl-tRNA formyltransferase, found in Lactiplantibacillus plantarum (strain ATCC BAA-793 / NCIMB 8826 / WCFS1) (Lactobacillus plantarum).